The sequence spans 291 residues: MLVRSFLGFAVLAATCLAASLQEVTEFGDNPTNIQMYIYVPDQLDTNPPVIVALHPCGGSAQQWFSGTQLPSYADDNGFILIYPSTPHMSNCWDIQNPDTLTHGQGGDALGIVSMVNYTLDKHSGDSSRVYAMGFSSGGMMTNQLAGSYPDVFEAGAVYSGVAFGCAAGAESATPFSPNQTCAQGLQKTAQEWGDFVRNAYAGYTGRRPRMQIFHGLEDTLVRPQCAEEALKQWSNVLGVELTQEVSGVPSPGWTQKIYGDGTQLQGFFGQGIGHQSTVNEQQLLQWFGLI.

The N-terminal stretch at 1 to 18 (MLVRSFLGFAVLAATCLA) is a signal peptide. The N-linked (GlcNAc...) asparagine glycan is linked to N117. S136 functions as the Charge relay system in the catalytic mechanism. Residue N179 is glycosylated (N-linked (GlcNAc...) asparagine).

Belongs to the carbohydrate esterase 1 (CE1) family. Feruloyl esterase type B subfamily.

The protein resides in the secreted. The enzyme catalyses feruloyl-polysaccharide + H2O = ferulate + polysaccharide.. In terms of biological role, feruloyl esterase which acts in synergy with xylanases in degradation of plant cell walls. Hydrolyzes the ester linkage of hydroxycinnamic acids (ferulic acid (FA) and p-coumaric acid) and diferulates present in plant cell walls. Is active on substrates containing ferulic acid ester linked to the C-5 and C-2 linkages of arabinofuranose, while it was found capable of de-esterifying acetylated glucuronoxylans. Efficiently releases ferulic acid (FA) from destarched wheat bran when incubated with an M3 xylanase. The protein is Feruloyl esterase B (Fae1a) of Thermothelomyces thermophilus (strain ATCC 42464 / BCRC 31852 / DSM 1799) (Sporotrichum thermophile).